The chain runs to 357 residues: Pre-mRNA-splicing factor RBM22 homolog (357 aa).

Residues 153–180 (RNMARVCSFWRKNSCNRGDECPYLHKEI) form a C3H1-type zinc finger. The 74-residue stretch at 222 to 295 (NKICIQGISE…CNLTVHLQDN (74 aa)) folds into the RRM domain.

The protein belongs to the SLT11 family. Probable component of the spliceosome C complex.

The protein localises to the nucleus. Involved in pre-mRNA splicing. Binds RNA. The protein is Pre-mRNA-splicing factor RBM22 homolog of Plasmodium falciparum (isolate 3D7).